Consider the following 89-residue polypeptide: MAHKKAGGSSRNGRDSESKRLGVKKFGGEAVIAGNIIIRQRGTRWHPGENVGIGKDHTLFSLANGTVSFRTKVNNRSYVSVIPAAVEAK.

The segment at 1-20 is disordered; it reads MAHKKAGGSSRNGRDSESKR.

This sequence belongs to the bacterial ribosomal protein bL27 family.

The polypeptide is Large ribosomal subunit protein bL27 (Bartonella bacilliformis (strain ATCC 35685 / KC583 / Herrer 020/F12,63)).